A 466-amino-acid chain; its full sequence is Chromosomal replication initiator protein DnaA (466 aa).

A domain I, interacts with DnaA modulators region spans residues 1-86; sequence MSLSLWQQCL…EVGTKPVTQT (86 aa). The interval 86–129 is domain II; it reads TLKTPVHNVVAPTQTTTAQPQRVAPAARSGWDNVPAPAEPTYRS. The interval 130–346 is domain III, AAA+ region; that stretch reads NVNVKHTFDN…GALNRVIANA (217 aa). ATP is bound by residues glycine 174, glycine 176, lysine 177, and threonine 178. Residues 347 to 466 form a domain IV, binds dsDNA region; that stretch reads NFTGRAITID…FSNLIRTLSS (120 aa).

Belongs to the DnaA family. In terms of assembly, oligomerizes as a right-handed, spiral filament on DNA at oriC.

The protein localises to the cytoplasm. In terms of biological role, plays an essential role in the initiation and regulation of chromosomal replication. ATP-DnaA binds to the origin of replication (oriC) to initiate formation of the DNA replication initiation complex once per cell cycle. Binds the DnaA box (a 9 base pair repeat at the origin) and separates the double-stranded (ds)DNA. Forms a right-handed helical filament on oriC DNA; dsDNA binds to the exterior of the filament while single-stranded (ss)DNA is stabiized in the filament's interior. The ATP-DnaA-oriC complex binds and stabilizes one strand of the AT-rich DNA unwinding element (DUE), permitting loading of DNA polymerase. After initiation quickly degrades to an ADP-DnaA complex that is not apt for DNA replication. Binds acidic phospholipids. This chain is Chromosomal replication initiator protein DnaA, found in Salmonella dublin (strain CT_02021853).